Consider the following 302-residue polypeptide: Quinolinate synthase (302 aa).

His-24 and Ser-41 together coordinate iminosuccinate. A [4Fe-4S] cluster-binding site is contributed by Cys-86. Iminosuccinate-binding positions include 112–114 and Ser-129; that span reads YVN. Residue Cys-173 coordinates [4Fe-4S] cluster. Iminosuccinate-binding positions include 199–201 and Thr-216; that span reads HPE. Cys-259 lines the [4Fe-4S] cluster pocket.

The protein belongs to the quinolinate synthase family. Type 2 subfamily. [4Fe-4S] cluster serves as cofactor.

It localises to the cytoplasm. It catalyses the reaction iminosuccinate + dihydroxyacetone phosphate = quinolinate + phosphate + 2 H2O + H(+). It participates in cofactor biosynthesis; NAD(+) biosynthesis; quinolinate from iminoaspartate: step 1/1. Its function is as follows. Catalyzes the condensation of iminoaspartate with dihydroxyacetone phosphate to form quinolinate. The protein is Quinolinate synthase of Thermococcus kodakarensis (strain ATCC BAA-918 / JCM 12380 / KOD1) (Pyrococcus kodakaraensis (strain KOD1)).